The sequence spans 543 residues: Small conductance calcium-activated potassium channel protein 1 (543 aa).

The disordered stretch occupies residues 1–92; the sequence is MNSHSYNGSV…SGKPSNVGHR (92 aa). Over residues 65–76 the composition is skewed to acidic residues; the sequence is DQDDDEDDEEDE. A helical membrane pass occupies residues 111–131; the sequence is LIFGMFGIVVMVTETELSWGV. Residues 140-160 traverse the membrane as a helical segment; that stretch reads FALKCLISLSTAILLGLVVLY. A helical transmembrane segment spans residues 179–199; that stretch reads IAMTCERVFLISLELAVCAIH. Residues 228–248 traverse the membrane as a helical segment; that stretch reads VLLSIPMFLRLYLLGRVMLLH. The chain crosses the membrane as a helical span at residues 277–297; it reads LMTICPGTVLLVFSISSWIIA. Residues 317 to 337 constitute an intramembrane region (pore-forming); it reads FLGAMWLISITFLSIGYGDMV. A helical transmembrane segment spans residues 346-366; it reads VCLLTGIMGAGCTALVVAVVA. The segment at 384–463 is calmodulin-binding; it reads DTQLTKRVKN…LTDLAKTQTV (80 aa). Residues 505-543 form a disordered region; the sequence is QAIRPPPPPLPPRPGPGPQDQAARSSPCRWTPVAPSDCG. Over residues 508–521 the composition is skewed to pro residues; the sequence is RPPPPPLPPRPGPG.

Belongs to the potassium channel KCNN family. KCa2.1/KCNN1 subfamily. In terms of assembly, homodimer. Heteromultimer with KCNN2 and KCNN3. The complex is composed of 4 channel subunits each of which binds to a calmodulin subunit which regulates the channel activity through calcium-binding. Interacts with calmodulin.

It localises to the membrane. The protein localises to the cytoplasm. It is found in the myofibril. Its subcellular location is the sarcomere. The protein resides in the z line. It carries out the reaction K(+)(in) = K(+)(out). Its activity is regulated as follows. Inhibited by bee venom neurotoxin apamin. Inhibited by d-tubocurarine and tetraethylammonium (TEA). Functionally, small conductance calcium-activated potassium channel that mediates the voltage-independent transmembrane transfer of potassium across the cell membrane through a constitutive interaction with calmodulin which binds the intracellular calcium allowing its opening. The current is characterized by a voltage-independent activation, an intracellular calcium concentration increase-dependent activation and a single-channel conductance of about 3 picosiemens. Also presents an inwardly rectifying current, thus reducing its already small outward conductance of potassium ions, which is particularly the case when the membrane potential displays positive values, above + 20 mV. Activation is followed by membrane hyperpolarization. Thought to regulate neuronal excitability by contributing to the slow component of synaptic afterhyperpolarization. The protein is Small conductance calcium-activated potassium channel protein 1 of Homo sapiens (Human).